The sequence spans 484 residues: tRNA-2-methylthio-N(6)-dimethylallyladenosine synthase (484 aa).

One can recognise an MTTase N-terminal domain in the interval 29 to 149; that stretch reads GVFHIHTLGC…LPKLLDQNRA (121 aa). [4Fe-4S] cluster contacts are provided by Cys38, Cys78, Cys112, Cys186, Cys190, and Cys193. The region spanning 172-401 is the Radical SAM core domain; it reads RASRISSWVA…VALQEQITEE (230 aa). The TRAM domain maps to 404–474; it reads ATFEGRDVEV…RHNLLADPDV (71 aa).

It belongs to the methylthiotransferase family. MiaB subfamily. Monomer. [4Fe-4S] cluster serves as cofactor.

The protein localises to the cytoplasm. The enzyme catalyses N(6)-dimethylallyladenosine(37) in tRNA + (sulfur carrier)-SH + AH2 + 2 S-adenosyl-L-methionine = 2-methylsulfanyl-N(6)-dimethylallyladenosine(37) in tRNA + (sulfur carrier)-H + 5'-deoxyadenosine + L-methionine + A + S-adenosyl-L-homocysteine + 2 H(+). Functionally, catalyzes the methylthiolation of N6-(dimethylallyl)adenosine (i(6)A), leading to the formation of 2-methylthio-N6-(dimethylallyl)adenosine (ms(2)i(6)A) at position 37 in tRNAs that read codons beginning with uridine. The chain is tRNA-2-methylthio-N(6)-dimethylallyladenosine synthase from Bifidobacterium longum subsp. infantis (strain ATCC 15697 / DSM 20088 / JCM 1222 / NCTC 11817 / S12).